The chain runs to 162 residues: MDEAYYSGNLESVLGYVSDMHTELASISQLVIAKIETIDNDILNKDIVNFIMCRSNLDNPFISFLDTVYTIIDQENYQTELINSLDDNEIIDCIVNKFMSFYKDNLENIVDAIITLKYIMNNPDFKTTYAEVLGSRIADIDIKQVIRKNILQLSNDIRERYL.

The protein belongs to the poxviridae A49 protein family.

The sequence is that of Protein A49 from Homo sapiens (Human).